We begin with the raw amino-acid sequence, 401 residues long: L-rhamnonate dehydratase (401 aa).

Residues His29 and Arg55 each contribute to the substrate site. Mg(2+)-binding residues include Asp222, Glu248, and Glu276. His325 serves as the catalytic Proton acceptor. Residue Glu345 participates in substrate binding.

Belongs to the mandelate racemase/muconate lactonizing enzyme family. RhamD subfamily. Homooctamer; tetramer of dimers. Mg(2+) is required as a cofactor.

It carries out the reaction L-rhamnonate = 2-dehydro-3-deoxy-L-rhamnonate + H2O. Its function is as follows. Catalyzes the dehydration of L-rhamnonate to 2-keto-3-deoxy-L-rhamnonate (KDR). In Salmonella schwarzengrund (strain CVM19633), this protein is L-rhamnonate dehydratase.